The following is a 370-amino-acid chain: 3-isopropylmalate dehydrogenase (370 aa).

77–90 (GPKWDSVPYEVRPE) contributes to the NAD(+) binding site. Substrate-binding residues include Arg97, Arg107, Arg135, and Asp226. Positions 226, 250, and 254 each coordinate Mg(2+). Residue 290–302 (GSAPDIAGKGIAN) coordinates NAD(+).

The protein belongs to the isocitrate and isopropylmalate dehydrogenases family. LeuB type 1 subfamily. Homodimer. It depends on Mg(2+) as a cofactor. Mn(2+) serves as cofactor.

Its subcellular location is the cytoplasm. The catalysed reaction is (2R,3S)-3-isopropylmalate + NAD(+) = 4-methyl-2-oxopentanoate + CO2 + NADH. Its pathway is amino-acid biosynthesis; L-leucine biosynthesis; L-leucine from 3-methyl-2-oxobutanoate: step 3/4. Its function is as follows. Catalyzes the oxidation of 3-carboxy-2-hydroxy-4-methylpentanoate (3-isopropylmalate) to 3-carboxy-4-methyl-2-oxopentanoate. The product decarboxylates to 4-methyl-2 oxopentanoate. This is 3-isopropylmalate dehydrogenase from Rhizobium johnstonii (strain DSM 114642 / LMG 32736 / 3841) (Rhizobium leguminosarum bv. viciae).